Reading from the N-terminus, the 161-residue chain is MARQKKYSGKGGARKKNKQKQSVAPRRRVEFRYKGFTLEELQEMPIKKFMEIVPSRQRRTMLRGITPNQRKLVMKIKKARRLTNRGKEPRVIRTHCRDFVITPEMIGLTFGIYNGKEFKDVTLVEETVGRFLGEMAPTRAVVQHGSPGMGATRGSMFVPIK.

A compositionally biased stretch (basic residues) spans 1 to 19 (MARQKKYSGKGGARKKNKQ). Residues 1–26 (MARQKKYSGKGGARKKNKQKQSVAPR) are disordered.

Belongs to the universal ribosomal protein uS19 family.

Functionally, protein S19 forms a complex with S13 that binds strongly to the 16S ribosomal RNA. This chain is Small ribosomal subunit protein uS19, found in Methanococcus maripaludis (strain C6 / ATCC BAA-1332).